A 99-amino-acid chain; its full sequence is Large ribosomal subunit protein eL21 (99 aa).

The protein belongs to the eukaryotic ribosomal protein eL21 family.

This is Large ribosomal subunit protein eL21 from Pyrobaculum calidifontis (strain DSM 21063 / JCM 11548 / VA1).